A 357-amino-acid chain; its full sequence is MEYKRFKTRQIKVGNVLIGGDAPISVQSMLFTKTRDIEGSLEQINRLYFAGANIVRLACLDMADARALKEIKAKSPLPLIVDIHFNHNLAVYCAEFIDGVRINPGNIGSKENIKEVVKACKERGIPIRIGVNHGSIEKQFSDKFGYGVDAMLESAMYNIKLLEDLDFFDIKISMKTSDAQKTIEAYERLRPLCDYPFHLGVTEAGTKFHSTVKSSIALGNLLLKGIGDTMRVSMTGELEEEIRVARAILQDSGVQKSGVNIISCPTCGRIQSDLLSAIKIVEEKTKHIKEPLNISVMGCVVNALGEAKGADVAIAFGKNQGLVIRHGEVVAKLKESELVDRFLAEVEDEVKSRAVKE.

[4Fe-4S] cluster-binding residues include Cys-264, Cys-267, Cys-299, and Glu-306.

The protein belongs to the IspG family. The cofactor is [4Fe-4S] cluster.

The catalysed reaction is (2E)-4-hydroxy-3-methylbut-2-enyl diphosphate + oxidized [flavodoxin] + H2O + 2 H(+) = 2-C-methyl-D-erythritol 2,4-cyclic diphosphate + reduced [flavodoxin]. Its pathway is isoprenoid biosynthesis; isopentenyl diphosphate biosynthesis via DXP pathway; isopentenyl diphosphate from 1-deoxy-D-xylulose 5-phosphate: step 5/6. In terms of biological role, converts 2C-methyl-D-erythritol 2,4-cyclodiphosphate (ME-2,4cPP) into 1-hydroxy-2-methyl-2-(E)-butenyl 4-diphosphate. The polypeptide is 4-hydroxy-3-methylbut-2-en-1-yl diphosphate synthase (flavodoxin) (Campylobacter jejuni subsp. jejuni serotype O:23/36 (strain 81-176)).